Reading from the N-terminus, the 306-residue chain is UDP-3-O-acyl-N-acetylglucosamine deacetylase (306 aa).

Residues histidine 81, histidine 241, and aspartate 245 each coordinate Zn(2+). Histidine 268 functions as the Proton donor in the catalytic mechanism.

This sequence belongs to the LpxC family. It depends on Zn(2+) as a cofactor.

The enzyme catalyses a UDP-3-O-[(3R)-3-hydroxyacyl]-N-acetyl-alpha-D-glucosamine + H2O = a UDP-3-O-[(3R)-3-hydroxyacyl]-alpha-D-glucosamine + acetate. Its pathway is glycolipid biosynthesis; lipid IV(A) biosynthesis; lipid IV(A) from (3R)-3-hydroxytetradecanoyl-[acyl-carrier-protein] and UDP-N-acetyl-alpha-D-glucosamine: step 2/6. Its function is as follows. Catalyzes the hydrolysis of UDP-3-O-myristoyl-N-acetylglucosamine to form UDP-3-O-myristoylglucosamine and acetate, the committed step in lipid A biosynthesis. In Hydrogenovibrio crunogenus (strain DSM 25203 / XCL-2) (Thiomicrospira crunogena), this protein is UDP-3-O-acyl-N-acetylglucosamine deacetylase.